The sequence spans 276 residues: HUWE1-associated protein modifying stress responses 2 (276 aa).

Disordered regions lie at residues 146-182 (GKVP…TPVG), 204-238 (ISMR…PNSL), and 252-276 (VRKR…NRMV). Positions 149 to 165 (PPTPQPPRTPRMSPRPP) are enriched in pro residues. Low complexity-rich tracts occupy residues 166-179 (AAAS…ESGT) and 208-219 (SGPPGSSSQDGG). The tract at residues 252-276 (VRKRTSAQFGDGSADSPLHKRNRMV) is nuclear localization signal.

It belongs to the HAPSTR1 family. As to quaternary structure, homooligomer. Heterooligomer with HAPSTR1; the interaction is direct and stabilizes HAPSTR1 independently of HUWE1. Interacts with HUWE1.

It is found in the nucleus. Functionally, together with HAPSTR1 plays a central regulatory role in the cellular response to molecular stressors, such as DNA damage, nutrient scarcity, and protein misfolding. Regulates these multiple stress response signaling pathways by stabilizing HAPSTR1, but also independently of HAPSTR1. The protein is HUWE1-associated protein modifying stress responses 2 of Mus musculus (Mouse).